The sequence spans 479 residues: Glycogen synthase (479 aa).

K15 serves as a coordination point for ADP-alpha-D-glucose.

The protein belongs to the glycosyltransferase 1 family. Bacterial/plant glycogen synthase subfamily.

The catalysed reaction is [(1-&gt;4)-alpha-D-glucosyl](n) + ADP-alpha-D-glucose = [(1-&gt;4)-alpha-D-glucosyl](n+1) + ADP + H(+). The protein operates within glycan biosynthesis; glycogen biosynthesis. Its function is as follows. Synthesizes alpha-1,4-glucan chains using ADP-glucose. This Roseobacter denitrificans (strain ATCC 33942 / OCh 114) (Erythrobacter sp. (strain OCh 114)) protein is Glycogen synthase.